The following is a 368-amino-acid chain: 3-dehydroquinate synthase (368 aa).

NAD(+)-binding positions include 112–116, 136–137, K149, and K158; these read GVIGD and TT. Residues E191, H256, and H273 each coordinate Zn(2+).

It belongs to the sugar phosphate cyclases superfamily. Dehydroquinate synthase family. Co(2+) serves as cofactor. The cofactor is Zn(2+). Requires NAD(+) as cofactor.

It localises to the cytoplasm. The enzyme catalyses 7-phospho-2-dehydro-3-deoxy-D-arabino-heptonate = 3-dehydroquinate + phosphate. Its pathway is metabolic intermediate biosynthesis; chorismate biosynthesis; chorismate from D-erythrose 4-phosphate and phosphoenolpyruvate: step 2/7. Its function is as follows. Catalyzes the conversion of 3-deoxy-D-arabino-heptulosonate 7-phosphate (DAHP) to dehydroquinate (DHQ). The protein is 3-dehydroquinate synthase of Prochlorococcus marinus (strain NATL1A).